Reading from the N-terminus, the 878-residue chain is Probable LRR receptor-like serine/threonine-protein kinase MEE39 (878 aa).

Residues 1-25 form the signal peptide; that stretch reads MKNLCWVFLSLFWFGVFLIIRFAEG. Residues 26–514 lie on the Extracellular side of the membrane; the sequence is QNQEGFISLD…IDKPKKKVAV (489 aa). N-linked (GlcNAc...) asparagine glycans are attached at residues Asn-183, Asn-203, Asn-235, Asn-290, Asn-404, Asn-418, Asn-445, and Asn-466. LRR repeat units follow at residues 413-436, 437-458, and 461-483; these read RIISLNLSSSGLSGTIVSNFQNLA, HLESLDLSNNSLSGIVPEFLAT, and SLLVINLSGNKLSGAIPQALRDR. The helical transmembrane segment at 515-535 threads the bilayer; the sequence is KVVAPVASIAAIVVVILLFVF. At 536–878 the chain is on the cytoplasmic side; it reads KKKMSSRNKP…FDTDVKPKAR (343 aa). Residue Thr-557 is modified to Phosphothreonine. In terms of domain architecture, Protein kinase spans 566 to 840; the sequence is KNLQRPLGEG…QVIINLKECL (275 aa). ATP is bound by residues 572–580 and Lys-594; that span reads LGEGGFGVV. Tyr-639 bears the Phosphotyrosine mark. Residue Asp-691 is the Proton acceptor of the active site. At Ser-726 the chain carries Phosphoserine. 2 positions are modified to phosphothreonine: Thr-727 and Thr-732. At Tyr-740 the chain carries Phosphotyrosine. The segment covering 849–869 has biased composition (polar residues); sequence RNNQNMDSGHSSDQLNVTVTF. The interval 849–878 is disordered; it reads RNNQNMDSGHSSDQLNVTVTFDTDVKPKAR.

This sequence belongs to the protein kinase superfamily. Ser/Thr protein kinase family.

The protein resides in the membrane. It carries out the reaction L-seryl-[protein] + ATP = O-phospho-L-seryl-[protein] + ADP + H(+). The enzyme catalyses L-threonyl-[protein] + ATP = O-phospho-L-threonyl-[protein] + ADP + H(+). Its function is as follows. Receptor-like serine/threonine-kinase required during the endosperm development in seeds. This chain is Probable LRR receptor-like serine/threonine-protein kinase MEE39 (MEE39), found in Arabidopsis thaliana (Mouse-ear cress).